Consider the following 116-residue polypeptide: Ly-6/neurotoxin-like protein 1 (116 aa).

The signal sequence occupies residues Met-1 to Ala-20. In terms of domain architecture, UPAR/Ly6 spans Leu-21–Ile-107. Cystine bridges form between Cys-23-Cys-46, Cys-26-Cys-33, Cys-39-Cys-64, Cys-68-Cys-85, and Cys-86-Cys-91. Cys-91 is lipidated: GPI-anchor amidated cysteine. Residues Asn-92–Leu-116 constitute a propeptide, removed in mature form.

Interacts with nAChRs containing alpha-4:beta-2 (CHRNA4:CHRNB2) and alpha-7 (CHRNA7) subunits. Interacts with CHRNA4 probably in the endoplasmic reticulum prior to nAChR pentameric assembly. Interacts with KCNA2/Potassium voltage-gated channel subfamily A member 2.

It localises to the cell membrane. Its subcellular location is the cell projection. It is found in the dendrite. The protein localises to the endoplasmic reticulum. Its function is as follows. Acts in different tissues through interaction to nicotinic acetylcholine receptors (nAChRs). The proposed role as modulator of nAChR activity seems to be dependent on the nAChR subtype and stoichiometry, and to involve an effect on nAChR trafficking and its cell surface expression, and on single channel properties of the nAChR inserted in the plasma membrane. Modulates functional properties of nicotinic acetylcholine receptors (nAChRs) to prevent excessive excitation, and hence neurodegeneration. Enhances desensitization by increasing both the rate and extent of desensitization of alpha-4:beta-2-containing nAChRs and slowing recovery from desensitization. Promotes large amplitude ACh-evoked currents through alpha-4:beta-2 nAChRs. Is involved in regulation of the nAChR pentameric assembly in the endoplasmic reticulum. Shifts stoichiometry from high sensitivity alpha-4(2):beta-2(3) to low sensitivity alpha-4(3):beta-2(2) nAChR. In vitro modulates alpha-3:beta-4-containing nAChRs. Reduces cell surface expression of (alpha-3:beta-4)(2):beta-4 and (alpha-3:beta-4)(2):alpha-5 nAChRs suggesting an interaction with nAChR alpha-3(-):(+)beta-4 subunit interfaces and an allosteric mode. Corresponding single channel effects characterized by decreased unitary conductance, altered burst proportions and enhanced desensitization/inactivation seem to depend on nAChR alpha:alpha subunit interfaces and are greater in (alpha-3:beta-2)(2):alpha-3 when compared to (alpha-3:beta-2)(2):alpha-5 nAChRs. Prevents plasticity in the primary visual cortex late in life. The chain is Ly-6/neurotoxin-like protein 1 from Homo sapiens (Human).